A 146-amino-acid polypeptide reads, in one-letter code: Meiotically up-regulated gene 151 protein (146 aa).

Residues Met1–Ala40 are disordered. Over residues Asn21 to Trp32 the composition is skewed to basic and acidic residues.

It localises to the nucleus. In terms of biological role, has a role in meiosis. This is Meiotically up-regulated gene 151 protein (mug151) from Schizosaccharomyces pombe (strain 972 / ATCC 24843) (Fission yeast).